The following is a 338-amino-acid chain: Nicotinate-nucleotide--dimethylbenzimidazole phosphoribosyltransferase (338 aa).

The active-site Proton acceptor is E305.

Belongs to the CobT family.

It catalyses the reaction 5,6-dimethylbenzimidazole + nicotinate beta-D-ribonucleotide = alpha-ribazole 5'-phosphate + nicotinate + H(+). It functions in the pathway nucleoside biosynthesis; alpha-ribazole biosynthesis; alpha-ribazole from 5,6-dimethylbenzimidazole: step 1/2. In terms of biological role, catalyzes the synthesis of alpha-ribazole-5'-phosphate from nicotinate mononucleotide (NAMN) and 5,6-dimethylbenzimidazole (DMB). The chain is Nicotinate-nucleotide--dimethylbenzimidazole phosphoribosyltransferase from Rhizobium leguminosarum bv. trifolii (strain WSM2304).